Reading from the N-terminus, the 455-residue chain is Venom prothrombin activator hopsarin-D (455 aa).

An N-terminal signal peptide occupies residues 1–20; that stretch reads MAPQLLLCLILTFLWSVPEA. Positions 21–40 are excised as a propeptide; the sequence is ESNVFLKSKVANRFLQRTKR. Residues 41–86 enclose the Gla domain; the sequence is SNSLFEEIRPGNIERECIEEKCSKEEAREVFEDNEKTETFWNVYVD. 4-carboxyglutamate is present on residues glutamate 46, glutamate 47, glutamate 54, glutamate 56, glutamate 59, glutamate 60, glutamate 65, glutamate 66, glutamate 69, glutamate 72, and glutamate 75. Residues cysteine 57 and cysteine 62 are joined by a disulfide bond. The 36-residue stretch at 86-121 folds into the EGF-like 1; calcium-binding domain; the sequence is DGDQCSSNPCHYHGTCKDGIGSYTCTCLPNYEGKNC. Cystine bridges form between cysteine 90–cysteine 101, cysteine 95–cysteine 110, cysteine 112–cysteine 121, cysteine 129–cysteine 140, cysteine 136–cysteine 149, cysteine 151–cysteine 164, cysteine 172–cysteine 328, cysteine 236–cysteine 252, cysteine 376–cysteine 390, and cysteine 401–cysteine 429. Serine 92 carries an O-linked (Hex...) serine glycan. An EGF-like 2 domain is found at 129–164; the sequence is CRAFNGNCWHFCKRVQSETQCSCAESYRLGVDGHSC. A propeptide spans 182 to 209 (activation peptide); that stretch reads REASLPDFVQSQKATLLKKSDNPSPDIR. A Peptidase S1 domain is found at 210-453; that stretch reads IVNGMDSKLG…FIPWIKKIMS (244 aa). Histidine 251 (charge relay system) is an active-site residue. The N-linked (GlcNAc...) asparagine glycan is linked to asparagine 254. Aspartate 308 acts as the Charge relay system in catalysis. Residue serine 405 is the Charge relay system of the active site.

The protein belongs to the peptidase S1 family. Snake venom subfamily. In terms of assembly, heterodimer of a light chain and a heavy chain; disulfide-linked. The vitamin K-dependent, enzymatic carboxylation of some glutamate residues allows the modified protein to bind calcium. In terms of tissue distribution, expressed by the venom gland.

It localises to the secreted. The catalysed reaction is Selective cleavage of Arg-|-Thr and then Arg-|-Ile bonds in prothrombin to form thrombin.. In terms of biological role, snake prothrombin activator that attacks the hemostatic system of prey. This protein is functionally similar to blood coagulation factor Xa. The procoagulant activity of hopsarin-D is approximately 10-fold lower than that of trocarin-D and FXa. This chain is Venom prothrombin activator hopsarin-D, found in Hoplocephalus stephensii (Stephens's banded snake).